We begin with the raw amino-acid sequence, 792 residues long: Homeobox protein HAZ1 (792 aa).

Residues 1–154 (MDKTTTSDLV…RPPKGGTPKD (154 aa)) form a disordered region. A compositionally biased stretch (polar residues) spans 15–36 (NIGSNAGSAQEPLTTNGKTSGV). The segment covering 38-49 (NRYKQTVKRGRK) has biased composition (basic residues). A compositionally biased stretch (polar residues) spans 51–67 (SQISPSKTYPLRSSHSN). A compositionally biased stretch (basic residues) spans 95–104 (VAKKRKRSKP). Over residues 116 to 127 (TSEKKNKAHNEL) the composition is skewed to basic and acidic residues. A PHD-type zinc finger spans residues 244 to 301 (DIFCAACGSKDVTLKNDIILCDGICDRGFHQYCLNPPLLAEDIPQGDEGWLCPACDCK). Disordered stretches follow at residues 338 to 495 (QIDA…NSNL) and 529 to 599 (YGKA…SDQQ). Residues 345–354 (PSDDSADNDY) show a composition bias toward acidic residues. The span at 362–371 (HKVDEEKSSG) shows a compositional bias: basic and acidic residues. Composition is skewed to acidic residues over residues 373-389 (DGGE…EDSE) and 433-453 (DESN…DDFC). The segment at residues 610–669 (STAKNRHFGPAINQKLKAHFKEDPYPSRATKENLAQELGLTFNQVTKWFSSTRHYARVAA) is a DNA-binding region (homeobox). 2 disordered regions span residues 677 to 697 (ENHT…QLRG) and 711 to 792 (SEER…KTGR). Polar residues-rich tracts occupy residues 716 to 737 (GQSN…QSVA) and 746 to 760 (NQGN…TPNA). The segment covering 774-792 (DEARRKAVQRELRKMKTGR) has biased composition (basic and acidic residues).

The protein belongs to the PHD-associated homeobox family. In terms of tissue distribution, expressed in roots, leaves, stems, panicle and seeds.

Its subcellular location is the nucleus. Transcriptional repressor involved in the regulation of gibberrelin (GA) signaling. Binds to the 5'-GATC-3' motif of HD16/EL1 promoter. Functions as a positive regulator of GA signaling by suppressing the expression of HD16/EL1, a negative regulator of GA signaling. The protein is Homeobox protein HAZ1 of Oryza sativa subsp. japonica (Rice).